The chain runs to 360 residues: Cyclin-dependent kinase 10 (360 aa).

The Protein kinase domain occupies 39-323 (FEKLNRIGEG…AGDCLESSYF (285 aa)). ATP-binding positions include 45–53 (IGEGTYGIV) and lysine 68. Aspartate 163 serves as the catalytic Proton acceptor. Threonine 196 carries the phosphothreonine modification. Residues 334-360 (LMPTFPHHRNKRAAPATSEGQSKRCKP) form a disordered region.

It belongs to the protein kinase superfamily. CMGC Ser/Thr protein kinase family. CDC2/CDKX subfamily. In terms of assembly, heterodimer with CCNQ, the interaction is required for kinase activity. Interacts with ETS2. Interacts with PRK2.

It localises to the cytoplasm. The protein resides in the cytoskeleton. It is found in the cilium basal body. It carries out the reaction L-seryl-[protein] + ATP = O-phospho-L-seryl-[protein] + ADP + H(+). It catalyses the reaction L-threonyl-[protein] + ATP = O-phospho-L-threonyl-[protein] + ADP + H(+). Its function is as follows. Cyclin-dependent kinase that phosphorylates the transcription factor ETS2 (in vitro) and positively controls its proteasomal degradation (in cells). Involved in the regulation of actin cytoskeleton organization through the phosphorylation of actin dynamics regulators such as PKN2. Is a negative regulator of ciliogenesis through phosphorylation of PKN2 and promotion of RhoA signaling. This chain is Cyclin-dependent kinase 10 (CDK10), found in Homo sapiens (Human).